Consider the following 261-residue polypeptide: Tryptophan synthase alpha chain (261 aa).

Active-site proton acceptor residues include glutamate 49 and aspartate 60.

The protein belongs to the TrpA family. Tetramer of two alpha and two beta chains.

It catalyses the reaction (1S,2R)-1-C-(indol-3-yl)glycerol 3-phosphate + L-serine = D-glyceraldehyde 3-phosphate + L-tryptophan + H2O. It functions in the pathway amino-acid biosynthesis; L-tryptophan biosynthesis; L-tryptophan from chorismate: step 5/5. Functionally, the alpha subunit is responsible for the aldol cleavage of indoleglycerol phosphate to indole and glyceraldehyde 3-phosphate. In Roseiflexus sp. (strain RS-1), this protein is Tryptophan synthase alpha chain.